The primary structure comprises 79 residues: UPF0154 protein SAG1601 (79 aa).

The chain crosses the membrane as a helical span at residues 5-25; that stretch reads IWILLIIVALFGGLVGGIFIA.

It belongs to the UPF0154 family.

The protein localises to the membrane. In Streptococcus agalactiae serotype V (strain ATCC BAA-611 / 2603 V/R), this protein is UPF0154 protein SAG1601.